Here is a 196-residue protein sequence, read N- to C-terminus: UMP-CMP kinase (196 aa).

13-18 (GAGKGT) is an ATP binding site. S33 is subject to Phosphoserine. Positions 33-63 (SAGELLRDERKNPDSQYGELIEKYIKDGKIV) are NMP. Position 39 (R39) interacts with a ribonucleoside 5'-phosphate. K43 and K55 each carry N6-acetyllysine. A ribonucleoside 5'-phosphate contacts are provided by residues 61-63 (KIV) and 93-96 (GFPR). Residue N100 participates in CMP binding. K106 carries the post-translational modification N6-succinyllysine. Residues 133 to 143 (ERGKSSGRSDD) are LID. R134 provides a ligand contact to ATP. Positions 140 and 151 each coordinate a ribonucleoside 5'-phosphate. Residue K179 participates in ATP binding. Residue S180 is modified to Phosphoserine.

Belongs to the adenylate kinase family. UMP-CMP kinase subfamily. In terms of assembly, monomer. Mg(2+) serves as cofactor.

Its subcellular location is the nucleus. The protein resides in the cytoplasm. The enzyme catalyses CMP + ATP = CDP + ADP. It carries out the reaction dCMP + ATP = dCDP + ADP. The catalysed reaction is UMP + ATP = UDP + ADP. It catalyses the reaction a 2'-deoxyribonucleoside 5'-diphosphate + ATP = a 2'-deoxyribonucleoside 5'-triphosphate + ADP. The enzyme catalyses a ribonucleoside 5'-diphosphate + ATP = a ribonucleoside 5'-triphosphate + ADP. In terms of biological role, catalyzes the phosphorylation of pyrimidine nucleoside monophosphates at the expense of ATP. Plays an important role in de novo pyrimidine nucleotide biosynthesis. Has preference for UMP and CMP as phosphate acceptors. Also displays broad nucleoside diphosphate kinase activity. The protein is UMP-CMP kinase of Bos taurus (Bovine).